Consider the following 293-residue polypeptide: ATP synthase gamma chain (293 aa).

It belongs to the ATPase gamma chain family. As to quaternary structure, F-type ATPases have 2 components, CF(1) - the catalytic core - and CF(0) - the membrane proton channel. CF(1) has five subunits: alpha(3), beta(3), gamma(1), delta(1), epsilon(1). CF(0) has three main subunits: a, b and c.

The protein resides in the cell membrane. Produces ATP from ADP in the presence of a proton gradient across the membrane. The gamma chain is believed to be important in regulating ATPase activity and the flow of protons through the CF(0) complex. This chain is ATP synthase gamma chain, found in Streptococcus agalactiae serotype III (strain NEM316).